The sequence spans 267 residues: NAD kinase 2 (267 aa).

Aspartate 52 serves as the catalytic Proton acceptor. Residues aspartate 52–alanine 53, asparagine 124–glutamate 125, arginine 151, aspartate 153, threonine 164–serine 169, and alanine 188 each bind NAD(+).

Belongs to the NAD kinase family. Requires a divalent metal cation as cofactor.

It is found in the cytoplasm. The catalysed reaction is NAD(+) + ATP = ADP + NADP(+) + H(+). Its function is as follows. Involved in the regulation of the intracellular balance of NAD and NADP, and is a key enzyme in the biosynthesis of NADP. Catalyzes specifically the phosphorylation on 2'-hydroxyl of the adenosine moiety of NAD to yield NADP. The polypeptide is NAD kinase 2 (Bacillus cereus (strain ATCC 14579 / DSM 31 / CCUG 7414 / JCM 2152 / NBRC 15305 / NCIMB 9373 / NCTC 2599 / NRRL B-3711)).